The primary structure comprises 120 residues: Aspartate 1-decarboxylase (120 aa).

Ser25 acts as the Schiff-base intermediate with substrate; via pyruvic acid in catalysis. Ser25 is subject to Pyruvic acid (Ser). Thr57 serves as a coordination point for substrate. Tyr58 acts as the Proton donor in catalysis. Residue 73–75 (GAA) participates in substrate binding.

It belongs to the PanD family. In terms of assembly, heterooctamer of four alpha and four beta subunits. Pyruvate serves as cofactor. Post-translationally, is synthesized initially as an inactive proenzyme, which is activated by self-cleavage at a specific serine bond to produce a beta-subunit with a hydroxyl group at its C-terminus and an alpha-subunit with a pyruvoyl group at its N-terminus.

It is found in the cytoplasm. The enzyme catalyses L-aspartate + H(+) = beta-alanine + CO2. It functions in the pathway cofactor biosynthesis; (R)-pantothenate biosynthesis; beta-alanine from L-aspartate: step 1/1. Functionally, catalyzes the pyruvoyl-dependent decarboxylation of aspartate to produce beta-alanine. The sequence is that of Aspartate 1-decarboxylase from Thermus thermophilus (strain ATCC 27634 / DSM 579 / HB8).